The sequence spans 98 residues: NADH-ubiquinone oxidoreductase chain 4L (98 aa).

A run of 3 helical transmembrane segments spans residues 1-21, 29-49, and 61-81; these read MPVV…GLLV, SLLC…VTVL, and IILL…LVMV.

The protein belongs to the complex I subunit 4L family. As to quaternary structure, core subunit of respiratory chain NADH dehydrogenase (Complex I) which is composed of 45 different subunits.

Its subcellular location is the mitochondrion inner membrane. The enzyme catalyses a ubiquinone + NADH + 5 H(+)(in) = a ubiquinol + NAD(+) + 4 H(+)(out). Its function is as follows. Core subunit of the mitochondrial membrane respiratory chain NADH dehydrogenase (Complex I) which catalyzes electron transfer from NADH through the respiratory chain, using ubiquinone as an electron acceptor. Part of the enzyme membrane arm which is embedded in the lipid bilayer and involved in proton translocation. The sequence is that of NADH-ubiquinone oxidoreductase chain 4L (MT-ND4L) from Ursus arctos (Brown bear).